We begin with the raw amino-acid sequence, 158 residues long: Coenzyme F420 hydrogenase subunit delta (158 aa).

It belongs to the peptidase A31 family.

The sequence is that of Coenzyme F420 hydrogenase subunit delta (frhD) from Methanothermobacter thermautotrophicus (strain ATCC 29096 / DSM 1053 / JCM 10044 / NBRC 100330 / Delta H) (Methanobacterium thermoautotrophicum).